The primary structure comprises 365 residues: DNA replication and repair protein RecF (365 aa).

30–37 (GDNGEGKT) provides a ligand contact to ATP.

Belongs to the RecF family.

The protein resides in the cytoplasm. Functionally, the RecF protein is involved in DNA metabolism; it is required for DNA replication and normal SOS inducibility. RecF binds preferentially to single-stranded, linear DNA. It also seems to bind ATP. This chain is DNA replication and repair protein RecF, found in Leptospira interrogans serogroup Icterohaemorrhagiae serovar Lai (strain 56601).